Reading from the N-terminus, the 369-residue chain is Homoserine O-acetyltransferase (369 aa).

Residues 44–350 enclose the AB hydrolase-1 domain; the sequence is NAILVAHAWT…AYGHDAFLLE (307 aa). Catalysis depends on Ser150, which acts as the Nucleophile. Arg217 serves as a coordination point for substrate. Catalysis depends on residues Asp311 and His344. Asp345 provides a ligand contact to substrate.

The protein belongs to the AB hydrolase superfamily. MetX family. As to quaternary structure, homodimer.

The protein localises to the cytoplasm. It catalyses the reaction L-homoserine + acetyl-CoA = O-acetyl-L-homoserine + CoA. It functions in the pathway amino-acid biosynthesis; L-methionine biosynthesis via de novo pathway; O-acetyl-L-homoserine from L-homoserine: step 1/1. In terms of biological role, transfers an acetyl group from acetyl-CoA to L-homoserine, forming acetyl-L-homoserine. The protein is Homoserine O-acetyltransferase of Geobacter metallireducens (strain ATCC 53774 / DSM 7210 / GS-15).